The primary structure comprises 186 residues: ATP synthase subunit delta (186 aa).

This sequence belongs to the ATPase delta chain family. As to quaternary structure, F-type ATPases have 2 components, F(1) - the catalytic core - and F(0) - the membrane proton channel. F(1) has five subunits: alpha(3), beta(3), gamma(1), delta(1), epsilon(1). CF(0) has four main subunits: a(1), b(1), b'(1) and c(10-14). The alpha and beta chains form an alternating ring which encloses part of the gamma chain. F(1) is attached to F(0) by a central stalk formed by the gamma and epsilon chains, while a peripheral stalk is formed by the delta, b and b' chains.

It is found in the cell inner membrane. F(1)F(0) ATP synthase produces ATP from ADP in the presence of a proton or sodium gradient. F-type ATPases consist of two structural domains, F(1) containing the extramembraneous catalytic core and F(0) containing the membrane proton channel, linked together by a central stalk and a peripheral stalk. During catalysis, ATP synthesis in the catalytic domain of F(1) is coupled via a rotary mechanism of the central stalk subunits to proton translocation. In terms of biological role, this protein is part of the stalk that links CF(0) to CF(1). It either transmits conformational changes from CF(0) to CF(1) or is implicated in proton conduction. The protein is ATP synthase subunit delta of Cereibacter sphaeroides (strain ATCC 17029 / ATH 2.4.9) (Rhodobacter sphaeroides).